The sequence spans 321 residues: 2,3,4,5-tetrahydropyridine-2,6-dicarboxylate N-succinyltransferase (321 aa).

Positions 166 and 183 each coordinate Mg(2+). E199 acts as the Acyl-anhydride intermediate in catalysis. Succinyl-CoA-binding positions include R201, G216, S219, A242, 257–258, G265, K281, and 294–297; these read EA and RRNS.

Belongs to the type 2 tetrahydrodipicolinate N-succinyltransferase family. As to quaternary structure, homotrimer.

Its subcellular location is the cytoplasm. The enzyme catalyses (S)-2,3,4,5-tetrahydrodipicolinate + succinyl-CoA + H2O = (S)-2-succinylamino-6-oxoheptanedioate + CoA. It participates in amino-acid biosynthesis; L-lysine biosynthesis via DAP pathway; LL-2,6-diaminopimelate from (S)-tetrahydrodipicolinate (succinylase route): step 1/3. Its function is as follows. Catalyzes the conversion of the cyclic tetrahydrodipicolinate (THDP) into the acyclic N-succinyl-L-2-amino-6-oxopimelate using succinyl-CoA. This Micrococcus luteus (strain ATCC 4698 / DSM 20030 / JCM 1464 / CCM 169 / CCUG 5858 / IAM 1056 / NBRC 3333 / NCIMB 9278 / NCTC 2665 / VKM Ac-2230) (Micrococcus lysodeikticus) protein is 2,3,4,5-tetrahydropyridine-2,6-dicarboxylate N-succinyltransferase.